The chain runs to 72 residues: Translation initiation factor IF-1 (72 aa).

The S1-like domain occupies Met1–Lys72.

The protein belongs to the IF-1 family. Component of the 30S ribosomal translation pre-initiation complex which assembles on the 30S ribosome in the order IF-2 and IF-3, IF-1 and N-formylmethionyl-tRNA(fMet); mRNA recruitment can occur at any time during PIC assembly.

Its subcellular location is the cytoplasm. In terms of biological role, one of the essential components for the initiation of protein synthesis. Stabilizes the binding of IF-2 and IF-3 on the 30S subunit to which N-formylmethionyl-tRNA(fMet) subsequently binds. Helps modulate mRNA selection, yielding the 30S pre-initiation complex (PIC). Upon addition of the 50S ribosomal subunit IF-1, IF-2 and IF-3 are released leaving the mature 70S translation initiation complex. In Syntrophus aciditrophicus (strain SB), this protein is Translation initiation factor IF-1.